Reading from the N-terminus, the 233-residue chain is Large ribosomal subunit protein uL1 (233 aa).

The protein belongs to the universal ribosomal protein uL1 family. Part of the 50S ribosomal subunit.

Its function is as follows. Binds directly to 23S rRNA. Forms the L1 stalk. Unlike the case in the Thermus thermophilus 70S ribosome, this protein is not seen to block the exit path of the E site tRNA. It is clear that the protein in the structure is flexible however, so this is probably due to its position in these crystals. Protein L1 is also a translational repressor protein, it controls the translation of the L11 operon by binding to its mRNA. This chain is Large ribosomal subunit protein uL1 (rplA), found in Deinococcus radiodurans (strain ATCC 13939 / DSM 20539 / JCM 16871 / CCUG 27074 / LMG 4051 / NBRC 15346 / NCIMB 9279 / VKM B-1422 / R1).